A 42-amino-acid polypeptide reads, in one-letter code: Delta-actinopoditoxin-Mb1a (42 aa).

Cystine bridges form between cysteine 1–cysteine 15, cysteine 8–cysteine 20, cysteine 14–cysteine 31, and cysteine 16–cysteine 42.

The protein belongs to the neurotoxin 06 (delta-actx) family. Expressed by the venom gland.

The protein localises to the secreted. Its function is as follows. Neurotoxin that slows the inactivation of vertebrate tetrodotoxin-sensitive voltage-gated sodium channels (Nav) and most likely insect sodium channels presumably by binding to site 3 of the channel. Effects are an increase in resting tension, a muscle fasciculation and a decrease in indirect twitch tension. It fails to affect tetrodotoxin-resistant sodium currents. In vivo, is lethal to both vertebrates and insects. The protein is Delta-actinopoditoxin-Mb1a of Missulena bradleyi (Eastern mouse spider).